The sequence spans 665 residues: GRB2-associated-binding protein 2 (665 aa).

S2 carries the post-translational modification Phosphoserine. One can recognise a PH domain in the interval D8–G119. The segment at R131–P183 is disordered. 10 positions are modified to phosphoserine: S135, S142, S143, S149, S150, S160, S165, S211, S220, and S261. The span at S160–L170 shows a compositional bias: polar residues. T262 bears the Phosphothreonine mark. Y263 is subject to Phosphotyrosine. T275 carries the phosphothreonine modification. S278 and S282 each carry phosphoserine. T284 carries the phosphothreonine modification. Y290 is modified (phosphotyrosine). T328 is modified (phosphothreonine). Disordered regions lie at residues T340 to V442 and P491 to L517. The short motif at P348–P355 is the SH3-binding element. Residue S365 is modified to Phosphoserine. Phosphothreonine is present on residues T382 and T388. S402 carries the phosphoserine modification. Phosphothreonine is present on T405. Over residues G412–S423 the composition is skewed to low complexity. 2 positions are modified to phosphoserine: S420 and S423. Y441 is modified (phosphotyrosine). The short motif at P499–P508 is the SH3-binding element. A Phosphoserine modification is found at S532. Polar residues-rich tracts occupy residues S548 to S566 and N578 to S600. The tract at residues S548 to D631 is disordered. Phosphoserine is present on S612. Y632 is subject to Phosphotyrosine. The span at T646–P659 shows a compositional bias: polar residues. The disordered stretch occupies residues T646–L665.

The protein belongs to the GAB family. As to quaternary structure, part of a complex composed of EEIG1, TNFRSF11A/RANK, PLCG2, GAB2, TEC and BTK; complex formation increases in the presence of TNFSF11/RANKL. Interacts with HCK. Interacts with SHC1; may mediate interaction with receptors. Interacts with SYK. Interacts with PI-3 kinase. Interacts with GRB2 (via SH3 2 domain). Interacts (phosphorylated) with PTPN11. Interacts with TNFRSF11A (via cytoplasmic domain). Interacts (phosphorylated) with 14-3-3 family proteins SFN, YWHAB, YWHAE, YWHAG, YWHAH, YWHAQ and YWHAZ; prevents interaction with GRB2 and attenuates GAB2 signaling. In terms of processing, phosphorylated upon EGF stimulation. Phosphorylated on tyrosine residues by HCK upon IL6 signaling. Phosphorylated on tyrosine residue(s) by the thrombopoietin receptor (TPOR), stem cell factor receptor (SCFR), and T-cell and B-cell antigen receptors, gp130, IL-2R and IL-3R. Phosphorylated upon stimulation of TNFRSF11A/RANK by TNFSF11/RANKL. Dephosphorylated by PTPN11.

It is found in the cytoplasm. The protein resides in the cell membrane. It localises to the membrane raft. Its function is as follows. Adapter protein which acts downstream of several membrane receptors including cytokine, antigen, hormone, cell matrix and growth factor receptors to regulate multiple signaling pathways. Regulates osteoclast differentiation mediating the TNFRSF11A/RANK signaling. In allergic response, it plays a role in mast cells activation and degranulation through PI-3-kinase regulation. Also involved in the regulation of cell proliferation and hematopoiesis. This Rattus norvegicus (Rat) protein is GRB2-associated-binding protein 2 (Gab2).